The following is a 510-amino-acid chain: Zinc metalloproteinase (510 aa).

A signal peptide spans 1–24 (MKSKLICIIMVIAFQAHFTMTVKA). Residues 25–200 (DSVGEEKLQN…ILKKQNMLSE (176 aa)) constitute a propeptide that is removed on maturation. Residue histidine 349 coordinates Zn(2+). Glutamate 350 is an active-site residue. Positions 353 and 373 each coordinate Zn(2+). Catalysis depends on histidine 437, which acts as the Proton donor.

It belongs to the peptidase M4 family. The cofactor is Zn(2+).

It is found in the secreted. Its function is as follows. Probably linked to the pathogenesis of listerial infection. In Listeria monocytogenes serovar 1/2a (strain ATCC BAA-679 / EGD-e), this protein is Zinc metalloproteinase (mpl).